Consider the following 227-residue polypeptide: Enolase-phosphatase E1 (227 aa).

It belongs to the HAD-like hydrolase superfamily. MasA/MtnC family. As to quaternary structure, monomer. Mg(2+) is required as a cofactor.

It carries out the reaction 5-methylsulfanyl-2,3-dioxopentyl phosphate + H2O = 1,2-dihydroxy-5-(methylsulfanyl)pent-1-en-3-one + phosphate. It functions in the pathway amino-acid biosynthesis; L-methionine biosynthesis via salvage pathway; L-methionine from S-methyl-5-thio-alpha-D-ribose 1-phosphate: step 3/6. Its pathway is amino-acid biosynthesis; L-methionine biosynthesis via salvage pathway; L-methionine from S-methyl-5-thio-alpha-D-ribose 1-phosphate: step 4/6. Functionally, bifunctional enzyme that catalyzes the enolization of 2,3-diketo-5-methylthiopentyl-1-phosphate (DK-MTP-1-P) into the intermediate 2-hydroxy-3-keto-5-methylthiopentenyl-1-phosphate (HK-MTPenyl-1-P), which is then dephosphorylated to form the acireductone 1,2-dihydroxy-3-keto-5-methylthiopentene (DHK-MTPene). The protein is Enolase-phosphatase E1 of Pseudomonas fluorescens (strain Pf0-1).